The following is a 406-amino-acid chain: 4-hydroxy-3-methylbut-2-en-1-yl diphosphate synthase (ferredoxin) (406 aa).

The [4Fe-4S] cluster site is built by Cys315, Cys318, Cys349, and Glu356.

Belongs to the IspG family. It depends on [4Fe-4S] cluster as a cofactor.

It catalyses the reaction (2E)-4-hydroxy-3-methylbut-2-enyl diphosphate + 2 oxidized [2Fe-2S]-[ferredoxin] + H2O = 2-C-methyl-D-erythritol 2,4-cyclic diphosphate + 2 reduced [2Fe-2S]-[ferredoxin] + H(+). Its pathway is isoprenoid biosynthesis; isopentenyl diphosphate biosynthesis via DXP pathway; isopentenyl diphosphate from 1-deoxy-D-xylulose 5-phosphate: step 5/6. Converts 2C-methyl-D-erythritol 2,4-cyclodiphosphate (ME-2,4cPP) into 1-hydroxy-2-methyl-2-(E)-butenyl 4-diphosphate. The polypeptide is 4-hydroxy-3-methylbut-2-en-1-yl diphosphate synthase (ferredoxin) (Microcystis aeruginosa (strain NIES-843 / IAM M-2473)).